The chain runs to 781 residues: Toll-like receptor 2 type-2 (781 aa).

The signal sequence occupies residues 1–24 (MHTWKMWAICTALAAHLPEEQALR). The Extracellular portion of the chain corresponds to 25 to 585 (QACLSCDATQ…QLSLMECHRS (561 aa)). A disulfide bridge connects residues cysteine 30 and cysteine 36. Asparagine 37 carries an N-linked (GlcNAc...) asparagine glycan. LRR repeat units follow at residues 53 to 74 (KITVLNLAHNRIKVIRTHDLQK), 77 to 98 (NLRTLLLQSNQISSIDEDSFGS), 101 to 122 (KLELLDLSNNSLAHLSPVWFGP), 125 to 146 (SLQHLRIQGNSYSDLGESSPFS), 150 to 171 (NLSSLHLGNPQFSIIRQGNFEG), and 174 to 195 (FLNTLRIDGDNLSQYEPGSLKS). Asparagine 109 carries N-linked (GlcNAc...) asparagine glycosylation. Asparagine 150, asparagine 184, asparagine 301, and asparagine 313 each carry an N-linked (GlcNAc...) asparagine glycan. A disulfide bridge links cysteine 350 with cysteine 379. 7 LRR repeats span residues 358–378 (SLEYLDLSANLLGDQSLEHSA), 385–406 (SLQTLNLSQNSLSDLKMTGKSL), 411–432 (NLNLLDISENNFGEIPDMCEWP), 434–455 (NLKYLNLSSTQIPKLTTCIPST), 456–474 (LEVLDVSANNLQDFGLQLP), 475–496 (FLKELYLTKNHLKTLPEATDIP), and 497–518 (NLVAMSISRNKLNSFSKEEFES). A glycan (N-linked (GlcNAc...) asparagine) is linked at asparagine 390. Cysteine 429 and cysteine 451 form a disulfide bridge. Asparagine 439 carries an N-linked (GlcNAc...) asparagine glycan. An LRRCT domain is found at 530–584 (NNFICSCEFLSFIHHEAGIAQVLVGWPESYICDSPLTVRGAQVGSVQLSLMECHR). Residues 586–606 (LLVSLICTLVFLFILILVVVG) traverse the membrane as a helical segment. Over 607–781 (YKYHAVWYMR…WENLKAALKS (175 aa)) the chain is Cytoplasmic. In terms of domain architecture, TIR spans 636–779 (ICYDAFVSYS…MFWENLKAAL (144 aa)).

The protein belongs to the Toll-like receptor family. As to quaternary structure, binds MYD88 (via TIR domain). N-glycosylated. As to expression, highly expressed in ovary. Also detected in brain, heart, lung, liver, spleen and kidney, and at low levels in gizzard, muscle, testis and proventriculus.

It is found in the membrane. Participates in the innate immune response to microbial agents. Acts via MYD88 and TRAF6, leading to NF-kappa-B activation, cytokine secretion and the inflammatory response. Mediates the response to mycoplasmal macrophage-activating lipopeptide-2kD (MALP-2). This Gallus gallus (Chicken) protein is Toll-like receptor 2 type-2 (TLR2-2).